The chain runs to 1061 residues: Isoleucine--tRNA ligase (1061 aa).

The short motif at 50–60 (PYTSGSAHMGT) is the 'HIGH' region element. The 'KMSKS' region motif lies at 604–608 (KMSKS). Lys-607 provides a ligand contact to ATP.

This sequence belongs to the class-I aminoacyl-tRNA synthetase family. IleS type 2 subfamily. As to quaternary structure, monomer. The cofactor is Zn(2+).

The protein resides in the cytoplasm. The enzyme catalyses tRNA(Ile) + L-isoleucine + ATP = L-isoleucyl-tRNA(Ile) + AMP + diphosphate. Catalyzes the attachment of isoleucine to tRNA(Ile). As IleRS can inadvertently accommodate and process structurally similar amino acids such as valine, to avoid such errors it has two additional distinct tRNA(Ile)-dependent editing activities. One activity is designated as 'pretransfer' editing and involves the hydrolysis of activated Val-AMP. The other activity is designated 'posttransfer' editing and involves deacylation of mischarged Val-tRNA(Ile). The protein is Isoleucine--tRNA ligase of Natronomonas pharaonis (strain ATCC 35678 / DSM 2160 / CIP 103997 / JCM 8858 / NBRC 14720 / NCIMB 2260 / Gabara) (Halobacterium pharaonis).